We begin with the raw amino-acid sequence, 255 residues long: 5-oxoprolinase subunit A (255 aa).

It belongs to the LamB/PxpA family. As to quaternary structure, forms a complex composed of PxpA, PxpB and PxpC.

The catalysed reaction is 5-oxo-L-proline + ATP + 2 H2O = L-glutamate + ADP + phosphate + H(+). Functionally, catalyzes the cleavage of 5-oxoproline to form L-glutamate coupled to the hydrolysis of ATP to ADP and inorganic phosphate. The protein is 5-oxoprolinase subunit A of Clostridium kluyveri (strain ATCC 8527 / DSM 555 / NBRC 12016 / NCIMB 10680 / K1).